Consider the following 905-residue polypeptide: DNA-directed RNA polymerase subunit Rpo1N (905 aa).

8 residues coordinate Zn(2+): Cys60, Cys63, Cys70, His73, Cys100, Cys103, Cys147, and Cys150. Mg(2+) is bound by residues Asp461, Asp463, and Asp465.

This sequence belongs to the RNA polymerase beta' chain family. In terms of assembly, part of the RNA polymerase complex. It depends on Mg(2+) as a cofactor. The cofactor is Zn(2+).

Its subcellular location is the cytoplasm. It catalyses the reaction RNA(n) + a ribonucleoside 5'-triphosphate = RNA(n+1) + diphosphate. In terms of biological role, DNA-dependent RNA polymerase (RNAP) catalyzes the transcription of DNA into RNA using the four ribonucleoside triphosphates as substrates. Forms the clamp head domain. This is DNA-directed RNA polymerase subunit Rpo1N from Thermococcus celer.